The sequence spans 169 residues: uncharacterized protein (169 aa).

Positions 28–157 (ELHLVVHVCI…EFIPYFFLNQ (130 aa)) constitute a Nudix hydrolase domain. The short motif at 65–87 (AGSALKGETSRQAAEREVKEELG) is the Nudix box element. E81 and E85 together coordinate Mg(2+).

Belongs to the Nudix hydrolase family. It depends on Mg(2+) as a cofactor.

This is an uncharacterized protein from Listeria innocua serovar 6a (strain ATCC BAA-680 / CLIP 11262).